A 396-amino-acid chain; its full sequence is 1-deoxy-D-xylulose 5-phosphate reductoisomerase (396 aa).

NADPH is bound by residues Thr-13, Gly-14, Ser-15, Ile-16, and Asn-127. Lys-128 provides a ligand contact to 1-deoxy-D-xylulose 5-phosphate. Residue Glu-129 coordinates NADPH. Asp-153 is a Mn(2+) binding site. Ser-154, Glu-155, Ser-184, and His-207 together coordinate 1-deoxy-D-xylulose 5-phosphate. Glu-155 is a Mn(2+) binding site. Residue Gly-213 coordinates NADPH. 4 residues coordinate 1-deoxy-D-xylulose 5-phosphate: Ser-220, Asn-225, Lys-226, and Glu-229. Glu-229 contributes to the Mn(2+) binding site.

The protein belongs to the DXR family. Mg(2+) serves as cofactor. Mn(2+) is required as a cofactor.

It carries out the reaction 2-C-methyl-D-erythritol 4-phosphate + NADP(+) = 1-deoxy-D-xylulose 5-phosphate + NADPH + H(+). The protein operates within isoprenoid biosynthesis; isopentenyl diphosphate biosynthesis via DXP pathway; isopentenyl diphosphate from 1-deoxy-D-xylulose 5-phosphate: step 1/6. Its function is as follows. Catalyzes the NADPH-dependent rearrangement and reduction of 1-deoxy-D-xylulose-5-phosphate (DXP) to 2-C-methyl-D-erythritol 4-phosphate (MEP). This chain is 1-deoxy-D-xylulose 5-phosphate reductoisomerase, found in Pseudomonas syringae pv. tomato (strain ATCC BAA-871 / DC3000).